Here is a 906-residue protein sequence, read N- to C-terminus: Coatomer subunit beta' (906 aa).

WD repeat units lie at residues 13–52 (ARSDRVKSVDLHPTEPWMLASLYNGSVCVWNHETQTLVKT), 55–94 (VCDLPVRAAKFVARKNWVVTGADDMQIRVFNYNTLERVHM), 97–136 (AHSDYIRCIAVHPTQPFILTSSDDMLIKLWDWDKKWSCSQ), 140–180 (GHTH…PNFT), 183–224 (GHEK…CVQT), 227–266 (GHAQNVSCASFHPELPIIITGSEDGTVRIWHSSTYRLEST), 350–388 (SCEIYPQTIQHNPNGRFVVVCGDGEYIIYTAMALRNKSF), and 390–425 (SAQEFAWAHDSSEYAIRESNSIVKIFKNFKEKKSFK). An N6-acetyllysine modification is found at lysine 627. Residues 746–783 (IRTGRLPEAAFLARTYLPSQVSRVVKLWRENLSKVNQK) form a WD 9 repeat. The disordered stretch occupies residues 837–863 (EEAKGFQPSRSTAQQELDGKPASPTPV). Serine 859 is modified (phosphoserine). At threonine 861 the chain carries Phosphothreonine. Residues 866-890 (ASHTANKEEKSLLELEVDLDNLELV) adopt a coiled-coil conformation.

This sequence belongs to the WD repeat COPB2 family. Oligomeric complex that consists of at least the alpha, beta, beta', gamma, delta, epsilon and zeta subunits. Probably interacts with PEX11A. Interacts with SCYL1. Interacts with JAGN1.

It localises to the cytoplasm. The protein localises to the cytosol. It is found in the golgi apparatus membrane. The protein resides in the cytoplasmic vesicle. Its subcellular location is the COPI-coated vesicle membrane. In terms of biological role, the coatomer is a cytosolic protein complex that binds to dilysine motifs and reversibly associates with Golgi non-clathrin-coated vesicles, which further mediate biosynthetic protein transport from the ER, via the Golgi up to the trans Golgi network. Coatomer complex is required for budding from Golgi membranes, and is essential for the retrograde Golgi-to-ER transport of dilysine-tagged proteins. In mammals, the coatomer can only be recruited by membranes associated to ADP-ribosylation factors (ARFs), which are small GTP-binding proteins; the complex also influences the Golgi structural integrity, as well as the processing, activity, and endocytic recycling of LDL receptors. Functionally, this coatomer complex protein, essential for Golgi budding and vesicular trafficking, is a selective binding protein (RACK) for protein kinase C, epsilon type. It binds to Golgi membranes in a GTP-dependent manner. The sequence is that of Coatomer subunit beta' (COPB2) from Pongo abelii (Sumatran orangutan).